A 300-amino-acid polypeptide reads, in one-letter code: E3 ubiquitin-protein ligase RNF212B (300 aa).

An RING-type zinc finger spans residues 6–40 (CNQCFRKDGAHFFVTSCGHIFCKKCVTLEKCAVCG). A coiled-coil region spans residues 87–124 (LLIAFYKHRITKLETAMQEAQQALVSQDKELSVLRKEN). The disordered stretch occupies residues 141-232 (YQGSRSITPR…SYRTSSASSG (92 aa)). Over residues 155-165 (TSPSQSVTPRP) the composition is skewed to polar residues. Residues 166–182 (SFQHSSQVVSRSSSAES) are compositionally biased toward low complexity. Residues 191 to 200 (GSLGQGGRGL) show a composition bias toward gly residues. The span at 211–232 (NETPSPASTHSLSYRTSSASSG) shows a compositional bias: polar residues.

Homodimer. In terms of processing, autoubiquitinated.

It localises to the chromosome. It catalyses the reaction S-ubiquitinyl-[E2 ubiquitin-conjugating enzyme]-L-cysteine + [acceptor protein]-L-lysine = [E2 ubiquitin-conjugating enzyme]-L-cysteine + N(6)-ubiquitinyl-[acceptor protein]-L-lysine.. The protein operates within protein modification; protein ubiquitination. Ubiquitin E3 ligase that acts as a crucial factor for crossing-over (CO) formation during meiosis. Essential for normal prophase I progression and for ensuring appropriate CO designation in meiosis. Recruits key components of the cross-over machinery either directly ou indirectly, leading to the activation of the MutL-gamma complex. The function of RNF212B in CO designation is dependent on its catalytic activity. This is E3 ubiquitin-protein ligase RNF212B (RNF212B) from Homo sapiens (Human).